Here is a 299-residue protein sequence, read N- to C-terminus: Acetaldehyde dehydrogenase (299 aa).

NAD(+) is bound at residue 11 to 14 (SGNI). Cysteine 126 acts as the Acyl-thioester intermediate in catalysis. Residues 157-165 (SAGPGTRAN) and asparagine 267 contribute to the NAD(+) site.

It belongs to the acetaldehyde dehydrogenase family.

The enzyme catalyses acetaldehyde + NAD(+) + CoA = acetyl-CoA + NADH + H(+). The chain is Acetaldehyde dehydrogenase from Bacillus thuringiensis (strain Al Hakam).